We begin with the raw amino-acid sequence, 541 residues long: Protein yellow (541 aa).

The first 21 residues, 1 to 21, serve as a signal peptide directing secretion; it reads MFQDKGWILVTLITLVTPSWA. 2 N-linked (GlcNAc...) asparagine glycosylation sites follow: asparagine 144 and asparagine 215. The interval 443-463 is disordered; that stretch reads QKPQTSWASSPPPPSRTYLPA.

This sequence belongs to the major royal jelly protein family.

It localises to the secreted. Functionally, controls the pigmentation pattern of the adult cuticle and larval mouth parts. In Drosophila melanogaster (Fruit fly), this protein is Protein yellow (y).